The sequence spans 279 residues: Replication protein A 32 kDa subunit A (279 aa).

A disordered region spans residues 1–39 (MMSFSQPDAFSPSQFTSSQNAAADSTTPSKSRGASSTMP). Residues 71 to 145 (VRLVGLVSGK…RATAFAIRPV (75 aa)) constitute a DNA-binding region (OB). Residues 181-210 (GSSSSNGFSEMTTPTSVKSNPAPVLSVTNG) form a disordered region. Residues 190 to 199 (EMTTPTSVKS) are compositionally biased toward polar residues.

Belongs to the replication factor A protein 2 family. Heterotrimer of RPA1, RPA2 and RPA3 (canonical replication protein A complex). Interacts with RPA1A, RPA1B and RPA3. In terms of processing, phosphorylated in a cell-cycle-dependent manner (from the S phase until mitosis). In response to DNA damage, recruited to DNA-repair nuclear foci, as a hypophosphorylated form. Expressed in root tips, roots, shoot apical meristem (SAM), young leaves, flag leaves and ears, and at lower levels in mature leaves.

Its subcellular location is the nucleus. In terms of biological role, component of the replication protein A complex (RPA) required for DNA recombination, repair and replication. The activity of RPA is mediated by single-stranded DNA binding and protein interactions. This chain is Replication protein A 32 kDa subunit A (RPA2A), found in Oryza sativa subsp. japonica (Rice).